We begin with the raw amino-acid sequence, 207 residues long: Thiamine-phosphate synthase (207 aa).

4-amino-2-methyl-5-(diphosphooxymethyl)pyrimidine contacts are provided by residues 37 to 41 (QYRHK) and Asn-69. 2 residues coordinate Mg(2+): Asp-70 and Asp-89. Ser-108 and Lys-138 together coordinate 4-amino-2-methyl-5-(diphosphooxymethyl)pyrimidine. 2-[(2R,5Z)-2-carboxy-4-methylthiazol-5(2H)-ylidene]ethyl phosphate is bound by residues Gly-165 and 185 to 186 (IS).

The protein belongs to the thiamine-phosphate synthase family. It depends on Mg(2+) as a cofactor.

The catalysed reaction is 2-[(2R,5Z)-2-carboxy-4-methylthiazol-5(2H)-ylidene]ethyl phosphate + 4-amino-2-methyl-5-(diphosphooxymethyl)pyrimidine + 2 H(+) = thiamine phosphate + CO2 + diphosphate. It catalyses the reaction 2-(2-carboxy-4-methylthiazol-5-yl)ethyl phosphate + 4-amino-2-methyl-5-(diphosphooxymethyl)pyrimidine + 2 H(+) = thiamine phosphate + CO2 + diphosphate. The enzyme catalyses 4-methyl-5-(2-phosphooxyethyl)-thiazole + 4-amino-2-methyl-5-(diphosphooxymethyl)pyrimidine + H(+) = thiamine phosphate + diphosphate. Its pathway is cofactor biosynthesis; thiamine diphosphate biosynthesis; thiamine phosphate from 4-amino-2-methyl-5-diphosphomethylpyrimidine and 4-methyl-5-(2-phosphoethyl)-thiazole: step 1/1. In terms of biological role, condenses 4-methyl-5-(beta-hydroxyethyl)thiazole monophosphate (THZ-P) and 2-methyl-4-amino-5-hydroxymethyl pyrimidine pyrophosphate (HMP-PP) to form thiamine monophosphate (TMP). This chain is Thiamine-phosphate synthase, found in Janthinobacterium sp. (strain Marseille) (Minibacterium massiliensis).